The chain runs to 330 residues: GTPase Obg (330 aa).

Residues 1–159 enclose the Obg domain; it reads MNFIDEVKIC…MWIHLSLKLL (159 aa). The OBG-type G domain maps to 160–327; that stretch reads SDVGLVGLPN…IVKLALKTIK (168 aa). Residues 166 to 173, 191 to 195, 212 to 215, 279 to 282, and 308 to 310 contribute to the GTP site; these read GLPNAGKS, FTTLV, DIPG, NKCD, and STY. Mg(2+)-binding residues include S173 and T193.

This sequence belongs to the TRAFAC class OBG-HflX-like GTPase superfamily. OBG GTPase family. As to quaternary structure, monomer. Mg(2+) serves as cofactor.

The protein localises to the cytoplasm. In terms of biological role, an essential GTPase which binds GTP, GDP and possibly (p)ppGpp with moderate affinity, with high nucleotide exchange rates and a fairly low GTP hydrolysis rate. Plays a role in control of the cell cycle, stress response, ribosome biogenesis and in those bacteria that undergo differentiation, in morphogenesis control. The polypeptide is GTPase Obg (Rickettsia felis (strain ATCC VR-1525 / URRWXCal2) (Rickettsia azadi)).